Here is a 767-residue protein sequence, read N- to C-terminus: Tetratricopeptide repeat protein 16 (767 aa).

9 TPR repeats span residues 18–51 (VREY…DPKL), 53–85 (DFYV…DPGN), 93–126 (AFVL…QPQN), 128–155 (SFSY…REVK), 208–241 (AKQS…NPLD), 242–275 (PNFF…VTDT), 288–321 (LLTY…EQNE), 322–355 (KGLY…SPLD), and 363–396 (GVLQ…SPQK). Residues 612–733 (EVTPAYGQRD…DSLSFSEISS (122 aa)) form a disordered region. Positions 684–718 (QRSSQKVTKTPSLTHSTTHSDIGESANDTPGQTPW) are enriched in polar residues.

This chain is Tetratricopeptide repeat protein 16 (Ttc16), found in Mus musculus (Mouse).